A 223-amino-acid polypeptide reads, in one-letter code: SCMKAAPMKEVSIRGQGSLAYPGLRTQGNLETLSGPNDATRGLTSLADTFEHVIEELLDEQQVVQPSKENKDADLYSSRVMLSSQVPLEPPLLFLLEEYKNYLDAANMSMRVRRHSDPARRGELSVCDSISEWVTAAEKKTAVDMSGATVTVLEKVPVPKGQLKQYFYETKCSSKGYAKEGCRGIDKRYWNSQCRTTQSYVRALTMDNKKRVGWRFIRIDTSC.

The first 5 residues, 1–5 (SCMKA), serve as a signal peptide directing secretion. A propeptide spanning residues 6-114 (APMKEVSIRG…AANMSMRVRR (109 aa)) is cleaved from the precursor. N-linked (GlcNAc...) asparagine glycosylation is present at Asn-107. 2 disulfides stabilise this stretch: Cys-127–Cys-194 and Cys-172–Cys-223.

The protein belongs to the NGF-beta family.

It is found in the secreted. Functionally, promotes the survival of neuronal populations that are all located either in the central nervous system or directly connected to it. The protein is Neurotrophic factor BDNF precursor form (BDNF) of Charina bottae (Northern rubber boa).